The primary structure comprises 458 residues: Transmembrane protein 135 (458 aa).

Helical transmembrane passes span 68–88 (ILQS…FFCI), 96–116 (FYSW…AILI), 149–169 (TLRN…MFFF), 298–318 (FQLG…SCFL), 331–351 (IVAG…TISM), and 377–397 (ADTI…VMEV).

This sequence belongs to the TMEM135 family.

The protein resides in the mitochondrion membrane. The protein localises to the peroxisome membrane. In terms of biological role, involved in mitochondrial metabolism by regulating the balance between mitochondrial fusion and fission. May act as a regulator of mitochondrial fission that promotes DNM1L-dependent fission through activation of DNM1L. May be involved in peroxisome organization. This Mus musculus (Mouse) protein is Transmembrane protein 135.